The following is a 185-amino-acid chain: MISTNDFRTGLTIEVDGDVYTVVEFMHVKPGKGSAFVRTKLKNRRTGAVIERTFRAGEKVNRAHVERREMQYLYNDGDNYYFMDTETFEQLSLRKEQLEDAIKYLKDNMNIFVLTYNGETIGIELPNSVELKVVETEPGIKGDTATGGTKNAVLETGAVIQVPLFIETGDVVRIDTRTGEYIERA.

Belongs to the elongation factor P family.

The protein resides in the cytoplasm. Its pathway is protein biosynthesis; polypeptide chain elongation. In terms of biological role, involved in peptide bond synthesis. Stimulates efficient translation and peptide-bond synthesis on native or reconstituted 70S ribosomes in vitro. Probably functions indirectly by altering the affinity of the ribosome for aminoacyl-tRNA, thus increasing their reactivity as acceptors for peptidyl transferase. This chain is Elongation factor P, found in Moorella thermoacetica (strain ATCC 39073 / JCM 9320).